The chain runs to 283 residues: Non-selective voltage-gated ion channel VDAC1 (283 aa).

Ala-2 carries the N-acetylalanine modification. Residue Lys-12 participates in ATP binding. A Glycyl lysine isopeptide (Lys-Gly) (interchain with G-Cter in ubiquitin) cross-link involves residue Lys-12. Ser-13 is subject to Phosphoserine. Thr-19 carries the phosphothreonine modification. Lys-20 provides a ligand contact to ATP. Position 20 is an N6-acetyllysine; alternate (Lys-20). Residue Lys-20 is modified to N6-succinyllysine; alternate. Lys-20 is covalently cross-linked (Glycyl lysine isopeptide (Lys-Gly) (interchain with G-Cter in ubiquitin); alternate). The next 2 membrane-spanning stretches (beta stranded) occupy residues 26–35 and 39–47; these read LIKLDLKTKS and LEFTSSGSA. Glycyl lysine isopeptide (Lys-Gly) (interchain with G-Cter in ubiquitin) cross-links involve residues Lys-53 and Lys-61. Residues 54-64 traverse the membrane as a beta stranded segment; it reads VTGSLETKYRW. Tyr-67 bears the Phosphotyrosine mark. 3 consecutive transmembrane segments (beta stranded) span residues 69-76, 80-89, and 95-104; these read LTFTEKWN, TLGTEITVED, and LKLTFDSSFS. Phosphothreonine is present on Thr-107. Lys-109 is subject to N6-acetyllysine; alternate. Lys-109 participates in a covalent cross-link: Glycyl lysine isopeptide (Lys-Gly) (interchain with G-Cter in ubiquitin); alternate. A Glycyl lysine isopeptide (Lys-Gly) (interchain with G-Cter in ubiquitin) cross-link involves residue Lys-110. Beta stranded transmembrane passes span 111-120, 123-130, 137-145, and 150-158; these read NAKIKTGYKR, INLGCDMD, SIRGALVLG, and LAGYQMNFE. Residue Lys-161 forms a Glycyl lysine isopeptide (Lys-Gly) (interchain with G-Cter in ubiquitin) linkage. Beta stranded transmembrane passes span 163-175, 178-185, 189-198, 202-211, 218-227, and 231-238; these read RVTQ…GYKT, FQLHTNVN, EFGGSIYQKV, LETAVNLAWT, RFGIAAKYQI, and ACFSAKVN. At Ser-193 the chain carries Phosphoserine; by NEK1. Position 240 is a phosphoserine (Ser-240). 242 to 244 lines the NAD(+) pocket; sequence LIG. The beta stranded transmembrane segment at 242–251 threads the bilayer; the sequence is LIGLGYTQTL. N6-acetyllysine is present on Lys-252. A beta stranded transmembrane segment spans residues 254–263; the sequence is GIKLTLSALL. An NAD(+)-binding site is contributed by 260–264; the sequence is SALLD. An N6-acetyllysine; alternate modification is found at Lys-266. Lys-266 is covalently cross-linked (Glycyl lysine isopeptide (Lys-Gly) (interchain with G-Cter in ubiquitin); alternate). A beta stranded membrane pass occupies residues 273–282; sequence HKLGLGLEFQ. A Glycyl lysine isopeptide (Lys-Gly) (interchain with G-Cter in ubiquitin) cross-link involves residue Lys-274.

The protein belongs to the eukaryotic mitochondrial porin family. In terms of assembly, homodimer and homotrimer; in response to cyclic AMP or calcium; oligomerization is required for scramblase activity. Component of the mitochondrial permeability transition pore complex (mPTPC), at least composed of SPG7, VDAC1 and PPIF. Interacts with SPG7, NIPSNAP2 and SLC25A30. Interacts with hexokinases including HK1. The HK1-VDAC1 complex interacts with ATF2. Interacts with BCL2L1. Interacts with BAK1. Interacts with RTL10/BOP (via BH3 domain). Interacts with amyloid-beta and APP; induces VDAC1 dephosphorylation. Interacts with TMEM41B. Interacts with BCAP31. Interacts with HSPA9; this interaction couples ITPR1 to VDAC1. (Microbial infection) Interacts with influenza A virus PB1-F2 protein. Phosphorylation at Ser-193 by NEK1 promotes the closed conformational state preventing excessive mitochondrial membrane permeability and subsequent apoptotic cell death after injury. Phosphorylation by the AKT-GSK3B axis stabilizes the protein probably by preventing ubiquitin-mediated proteasomal degradation. In terms of processing, ubiquitinated. Undergoes monoubiquitination and polyubiquitination by PRKN; monoubiquitination at Lys-274 inhibits apoptosis, whereas polyubiquitination leads to its degradation and promotes mitophagy. Deubiquitinated by USP30. As to expression, expressed in erythrocytes (at protein level). Expressed in heart, liver and skeletal muscle.

It localises to the mitochondrion outer membrane. The protein localises to the cell membrane. The protein resides in the membrane raft. The enzyme catalyses chloride(in) = chloride(out). It carries out the reaction K(+)(in) = K(+)(out). The catalysed reaction is ATP(in) = ATP(out). It catalyses the reaction Ca(2+)(in) = Ca(2+)(out). The enzyme catalyses Na(+)(in) = Na(+)(out). It carries out the reaction Mg(2+)(in) = Mg(2+)(out). The catalysed reaction is L-glutamate(out) = L-glutamate(in). It catalyses the reaction dopamine(out) = dopamine(in). The enzyme catalyses acetylcholine(in) = acetylcholine(out). It carries out the reaction Fe(III)-[cytochrome c](out) = Fe(III)-[cytochrome c](in). The catalysed reaction is a 1,2-diacyl-sn-glycero-3-phosphocholine(in) = a 1,2-diacyl-sn-glycero-3-phosphocholine(out). It catalyses the reaction a 1,2-diacyl-sn-glycero-3-phospho-L-serine(in) = a 1,2-diacyl-sn-glycero-3-phospho-L-serine(out). Inhibited by nitric oxide. In terms of biological role, non-selective voltage-gated ion channel that mediates the transport of anions and cations through the mitochondrion outer membrane and plasma membrane. The channel at the outer mitochondrial membrane allows diffusion of small hydrophilic molecules; in the plasma membrane it is involved in cell volume regulation and apoptosis. It adopts an open conformation at low or zero membrane potential and a closed conformation at potentials above 30-40 mV. The open state has a weak anion selectivity whereas the closed state is cation-selective. Binds various signaling molecules, including the sphingolipid ceramide, the phospholipid phosphatidylcholine, and the sterols cholesterol and oxysterol. In depolarized mitochondria, acts downstream of PRKN and PINK1 to promote mitophagy or prevent apoptosis; polyubiquitination by PRKN promotes mitophagy, while monoubiquitination by PRKN decreases mitochondrial calcium influx which ultimately inhibits apoptosis. May participate in the formation of the permeability transition pore complex (PTPC) responsible for the release of mitochondrial products that triggers apoptosis. May mediate ATP export from cells. Part of a complex composed of HSPA9, ITPR1 and VDAC1 that regulates mitochondrial calcium-dependent apoptosis by facilitating calcium transport from the ER lumen to the mitochondria intermembrane space thus providing calcium for the downstream calcium channel MCU that directly releases it into mitochondria matrix. Mediates cytochrome c efflux. Functionally, catalyzes the scrambling of phospholipids across the outer mitochondrial membrane; the mechanism is unrelated to channel activity and is capable of translocating both anionic and zwitterionic phospholipids. The protein is Non-selective voltage-gated ion channel VDAC1 of Homo sapiens (Human).